The sequence spans 254 residues: MKYRRILLKLSGEALMGERPYGIDPEVLQSIASEVASVVRAGVQVAIVVGGGNIWRGRKEAAAQGMDQASADYVGMLATVINALTLQDAIERAGIPTRVQTAIAMQEVAEPYIRRRAIRHLEKGRVVIFGAGSGNPFFTTDTTAALRAAEIDAEVIFKATKVDGVYDADPKTHPQARRYDVLSYQDVLTRDLRVMDSTAIALCKENQLPIVVFDLTTPGNIYRVVQGEPIGTWIGQTTPKSNGIPARLAQESGS.

9–12 lines the ATP pocket; sequence KLSG. Position 51 (glycine 51) interacts with UMP. Residues glycine 52 and arginine 56 each contribute to the ATP site. UMP-binding positions include aspartate 72 and 133-140; that span reads SGNPFFTT. The ATP site is built by threonine 160, tyrosine 166, and aspartate 169.

This sequence belongs to the UMP kinase family. Homohexamer.

Its subcellular location is the cytoplasm. It catalyses the reaction UMP + ATP = UDP + ADP. It participates in pyrimidine metabolism; CTP biosynthesis via de novo pathway; UDP from UMP (UMPK route): step 1/1. With respect to regulation, inhibited by UTP. Catalyzes the reversible phosphorylation of UMP to UDP. This Synechococcus sp. (strain JA-3-3Ab) (Cyanobacteria bacterium Yellowstone A-Prime) protein is Uridylate kinase.